Reading from the N-terminus, the 245-residue chain is Orotidine 5'-phosphate decarboxylase (245 aa).

Substrate is bound by residues D22, K44, 71–80 (DLKFHDIPNT), T131, R192, Q201, G221, and R222. K73 acts as the Proton donor in catalysis.

It belongs to the OMP decarboxylase family. Type 1 subfamily. In terms of assembly, homodimer.

The catalysed reaction is orotidine 5'-phosphate + H(+) = UMP + CO2. The protein operates within pyrimidine metabolism; UMP biosynthesis via de novo pathway; UMP from orotate: step 2/2. Functionally, catalyzes the decarboxylation of orotidine 5'-monophosphate (OMP) to uridine 5'-monophosphate (UMP). The polypeptide is Orotidine 5'-phosphate decarboxylase (Shigella boydii serotype 18 (strain CDC 3083-94 / BS512)).